A 66-amino-acid polypeptide reads, in one-letter code: Phylloseptin-H9 (66 aa).

The N-terminal stretch at 1-22 is a signal peptide; sequence MAFLKKSLFLVLFLGLVSLSIC. Residues 23 to 44 constitute a propeptide that is removed on maturation; sequence EEEKRETEEEENDQEEDDKSEE. Positions 24 to 44 are disordered; the sequence is EEKRETEEEENDQEEDDKSEE. Positions 30–41 are enriched in acidic residues; it reads EEEENDQEEDDK. Position 65 is a leucine amide (L65).

As to expression, expressed by the skin glands.

Its subcellular location is the secreted. Has antimicrobial activity. The protein is Phylloseptin-H9 of Pithecopus hypochondrialis (Orange-legged leaf frog).